The primary structure comprises 159 residues: Probable deoxyuridine 5'-triphosphate nucleotidohydrolase (159 aa).

The protein belongs to the dCTP deaminase family. Archaeal dUTPase subfamily.

The enzyme catalyses dUTP + H2O = dUMP + diphosphate + H(+). It participates in pyrimidine metabolism; dUMP biosynthesis; dUMP from dCTP (dUTP route): step 2/2. Functionally, this enzyme is involved in nucleotide metabolism: it produces dUMP, the immediate precursor of thymidine nucleotides and it decreases the intracellular concentration of dUTP so that uracil cannot be incorporated into DNA. In Aeropyrum pernix (strain ATCC 700893 / DSM 11879 / JCM 9820 / NBRC 100138 / K1), this protein is Probable deoxyuridine 5'-triphosphate nucleotidohydrolase.